A 187-amino-acid chain; its full sequence is Bis(5'-nucleosyl)-tetraphosphatase, symmetrical (187 aa).

An HD domain is found at 18 to 132 (RYQHTIGVME…IFLADYIEPN (115 aa)). ADP is bound at residue H21. 3 residues coordinate Fe cation: H21, H50, and D51. Residues 51-54 (DYAK), H83, 109-110 (HT), D127, R133, and 170-175 (PIYPDT) contribute to the ADP site. D127 is a binding site for Fe cation.

Belongs to the Ap4A hydrolase YqeK family. In terms of assembly, homodimer.

It carries out the reaction P(1),P(4)-bis(5'-adenosyl) tetraphosphate + H2O = 2 ADP + 2 H(+). Its function is as follows. Hydrolyzes diadenosine 5',5'''-P1,P4-tetraphosphate (Ap4A) to yield ADP. This Halalkalibacterium halodurans (strain ATCC BAA-125 / DSM 18197 / FERM 7344 / JCM 9153 / C-125) (Bacillus halodurans) protein is Bis(5'-nucleosyl)-tetraphosphatase, symmetrical.